Consider the following 293-residue polypeptide: Small ribosomal subunit biogenesis GTPase RsgA (293 aa).

Residues 63–223 form the CP-type G domain; the sequence is KNELVRPPIA…VADTPGFSSL (161 aa). GTP-binding positions include 112–115 and 166–174; these read SKMD and GQSGVGKSS. Residues Cys247, Cys252, His254, and Cys260 each coordinate Zn(2+).

This sequence belongs to the TRAFAC class YlqF/YawG GTPase family. RsgA subfamily. As to quaternary structure, monomer. Associates with 30S ribosomal subunit, binds 16S rRNA. It depends on Zn(2+) as a cofactor.

It is found in the cytoplasm. One of several proteins that assist in the late maturation steps of the functional core of the 30S ribosomal subunit. Helps release RbfA from mature subunits. May play a role in the assembly of ribosomal proteins into the subunit. Circularly permuted GTPase that catalyzes slow GTP hydrolysis, GTPase activity is stimulated by the 30S ribosomal subunit. The polypeptide is Small ribosomal subunit biogenesis GTPase RsgA (Bacillus anthracis).